We begin with the raw amino-acid sequence, 204 residues long: Ubiquitin-conjugating enzyme E2 S (204 aa).

Residues 14–160 (QIIKQVAREI…AKMFTEIHAK (147 aa)) form the UBC core domain. The Glycyl thioester intermediate role is filled by Cys98. Over residues 165–176 (SSNNISEGQQES) the composition is skewed to polar residues. The segment at 165–204 (SSNNISEGQQESLPGKKRVAVNEKMCDKKKKDKKRALKRL) is disordered. Residues 191 to 204 (DKKKKDKKRALKRL) show a composition bias toward basic residues.

This sequence belongs to the ubiquitin-conjugating enzyme family.

It carries out the reaction S-ubiquitinyl-[E1 ubiquitin-activating enzyme]-L-cysteine + [E2 ubiquitin-conjugating enzyme]-L-cysteine = [E1 ubiquitin-activating enzyme]-L-cysteine + S-ubiquitinyl-[E2 ubiquitin-conjugating enzyme]-L-cysteine.. It functions in the pathway protein modification; protein ubiquitination. Catalyzes the covalent attachment of ubiquitin to other proteins. Acts as an essential factor of the anaphase promoting complex/cyclosome (APC/C), a cell cycle-regulated ubiquitin ligase that controls progression through mitosis. Acts by specifically elongating polyubiquitin chains initiated by the E2 enzyme UBCH10 on APC/C substrates, enhancing the degradation of APC/C substrates by the proteasome and promoting mitotic exit. The protein is Ubiquitin-conjugating enzyme E2 S of Nematostella vectensis (Starlet sea anemone).